Here is a 157-residue protein sequence, read N- to C-terminus: Protein Smg (157 aa).

This sequence belongs to the Smg family.

The sequence is that of Protein Smg from Yersinia pseudotuberculosis serotype O:1b (strain IP 31758).